A 130-amino-acid polypeptide reads, in one-letter code: Sirohydrochlorin cobaltochelatase (130 aa).

H12 (proton acceptor) is an active-site residue. H12 contributes to the Co(2+) binding site. Ni(2+) is bound at residue H12. Residues E48 and 73–78 (LASGVH) each bind substrate. Residue H78 coordinates Co(2+). H78 contacts Ni(2+).

This sequence belongs to the CbiX family. CbiXS subfamily. As to quaternary structure, homotetramer; dimer of dimers.

The catalysed reaction is Co-sirohydrochlorin + 2 H(+) = sirohydrochlorin + Co(2+). It catalyses the reaction Ni-sirohydrochlorin + 2 H(+) = sirohydrochlorin + Ni(2+). The protein operates within cofactor biosynthesis; adenosylcobalamin biosynthesis; cob(II)yrinate a,c-diamide from sirohydrochlorin (anaerobic route): step 1/10. In terms of biological role, catalyzes the insertion of Co(2+) into sirohydrochlorin as part of the anaerobic pathway to cobalamin biosynthesis (Potential). Involved in the biosynthesis of the unique nickel-containing tetrapyrrole coenzyme F430, the prosthetic group of methyl-coenzyme M reductase (MCR), which plays a key role in methanogenesis and anaerobic methane oxidation. Catalyzes the insertion of Ni(2+) into sirohydrochlorin to yield Ni-sirohydrochlorin. The polypeptide is Sirohydrochlorin cobaltochelatase (Methanosarcina acetivorans (strain ATCC 35395 / DSM 2834 / JCM 12185 / C2A)).